The primary structure comprises 414 residues: Glutamyl-tRNA reductase (414 aa).

Substrate-binding positions include 49–52, S108, 113–115, and Q119; these read TCNR and EPQ. C50 (nucleophile) is an active-site residue. 188–193 lines the NADP(+) pocket; sequence GAGQTG.

It belongs to the glutamyl-tRNA reductase family. As to quaternary structure, homodimer.

It carries out the reaction (S)-4-amino-5-oxopentanoate + tRNA(Glu) + NADP(+) = L-glutamyl-tRNA(Glu) + NADPH + H(+). The protein operates within porphyrin-containing compound metabolism; protoporphyrin-IX biosynthesis; 5-aminolevulinate from L-glutamyl-tRNA(Glu): step 1/2. Its function is as follows. Catalyzes the NADPH-dependent reduction of glutamyl-tRNA(Glu) to glutamate 1-semialdehyde (GSA). In Francisella tularensis subsp. novicida (strain U112), this protein is Glutamyl-tRNA reductase.